The following is a 575-amino-acid chain: Interleukin-10 receptor subunit alpha (575 aa).

Positions 1–16 (MLSRLLPFLVTISSLS) are cleaved as a signal peptide. Over 17–241 (LEFIAYGTEL…QYFTVTNLSI (225 aa)) the chain is Extracellular. N50, N66, N113, and N182 each carry an N-linked (GlcNAc...) asparagine glycan. C204 and C225 form a disulfide bridge. N238 carries N-linked (GlcNAc...) asparagine glycosylation. A helical membrane pass occupies residues 242–262 (LVISMLLFCGILVCLVLQWYI). The Cytoplasmic segment spans residues 263-575 (RHPGKLPTVL…PLISSLQVEE (313 aa)). A phosphotyrosine mark is found at Y443 and Y493.

Belongs to the type II cytokine receptor family. As to quaternary structure, interacts with IL10. Interacts with IL10RB. Interacts (via its cytoplasmic domain) with JAK1 (via N-terminus). Interacts with BTRC; this interaction leads to IL10RA ubiquitination and subsequent degradation. Interacts with STAT3. In terms of processing, phosphorylated. Phosphorylation of the cytoplasmic tail induced STAT3 activation. Ubiquitinated by BTRC; ubiquitination leads to endocytosis and subsequent degradation of IL10RA.

The protein resides in the cell membrane. It is found in the cytoplasm. In terms of biological role, cell surface receptor for the cytokine IL10 that participates in IL10-mediated anti-inflammatory functions, limiting excessive tissue disruption caused by inflammation. Upon binding to IL10, induces a conformational change in IL10RB, allowing IL10RB to bind IL10 as well. In turn, the heterotetrameric assembly complex, composed of two subunits of IL10RA and IL10RB, activates the kinases JAK1 and TYK2 that are constitutively associated with IL10RA and IL10RB respectively. These kinases then phosphorylate specific tyrosine residues in the intracellular domain in IL10RA leading to the recruitment and subsequent phosphorylation of STAT3. Once phosphorylated, STAT3 homodimerizes, translocates to the nucleus and activates the expression of anti-inflammatory genes. In addition, IL10RA-mediated activation of STAT3 inhibits starvation-induced autophagy. This chain is Interleukin-10 receptor subunit alpha (Il10ra), found in Mus musculus (Mouse).